A 251-amino-acid chain; its full sequence is Tyrosine transport ATP-binding protein (251 aa).

Residues 2 to 248 (LQIKNLSKSF…TVEEILEKFE (247 aa)) enclose the ABC transporter domain. 39-46 (GSNGTGKS) provides a ligand contact to ATP.

The protein belongs to the ABC transporter superfamily. As to quaternary structure, the complex is probably composed of two ATP-binding proteins (CDR20291_0806), two transmembrane proteins (CDR20291_0807) and a solute-binding protein (CDR20291_0805).

It is found in the cell membrane. The catalysed reaction is L-tyrosine(out) + ATP + H2O = L-tyrosine(in) + ADP + phosphate + H(+). Functionally, probably part of an ABC transporter complex involved in tyrosine uptake. May also import phenylalanine. Probably responsible for energy coupling to the transport system. This Clostridioides difficile (strain R20291) (Peptoclostridium difficile) protein is Tyrosine transport ATP-binding protein.